The primary structure comprises 476 residues: Proton-coupled amino acid transporter 1 (476 aa).

Residues 1-15 are compositionally biased toward basic and acidic residues; it reads MSTQRLRNEDYHDYS. The disordered stretch occupies residues 1-32; the sequence is MSTQRLRNEDYHDYSSTDVSPEESPSEGLNNL. Residues 1–51 are Cytoplasmic-facing; sequence MSTQRLRNEDYHDYSSTDVSPEESPSEGLNNLSSPGSYQRFGQSNSTTWFQ. A helical transmembrane segment spans residues 52-72; that stretch reads TLIHLLKGNIGTGLLGLPLAV. Residues 73 to 78 are Extracellular-facing; it reads KNAGIV. Residues 79–99 form a helical membrane-spanning segment; the sequence is MGPISLLIIGIVAVHCMGILV. The Cytoplasmic segment spans residues 100–141; sequence KCAHHFCRRLNKSFVDYGDTVMYGLESSPCSWLRNHAHWGRR. Residues 142–162 form a helical membrane-spanning segment; the sequence is VVDFFLIVTQLGFCCVYFVFL. Topologically, residues 163-190 are extracellular; sequence ADNFKQVIEAANGTTNNCHNNETVILTP. Asn174 and Asn183 each carry an N-linked (GlcNAc...) asparagine glycan. Cysteines 180 and 329 form a disulfide. Residues 191–211 traverse the membrane as a helical segment; sequence TMDSRLYMLSFLPFLVLLVFI. The Cytoplasmic portion of the chain corresponds to 212-215; it reads RNLR. A helical membrane pass occupies residues 216 to 236; sequence ALSIFSLLANITMLVSLVMIY. Over 237 to 257 the chain is Extracellular; that stretch reads QFIVQRIPDPSHLPLVAPWKT. The helical transmembrane segment at 258 to 278 threads the bilayer; sequence YPLFFGTAIFSFEGIGMVLPL. Residues 279–289 are Cytoplasmic-facing; it reads ENKMKDPRKFP. Residues 290 to 310 form a helical membrane-spanning segment; that stretch reads LILYLGMVIVTILYISLGCLG. The Extracellular segment spans residues 311 to 342; the sequence is YLQFGANIQGSITLNLPNCWLYQSVKLLYSIG. The helical transmembrane segment at 343 to 363 threads the bilayer; the sequence is IFFTYALQFYVPAEIIIPFFV. Residues 364–372 lie on the Cytoplasmic side of the membrane; the sequence is SRAPEHCEL. Residues 373–393 traverse the membrane as a helical segment; it reads VVDLFVRTVLVCLTCILAILI. Topologically, residues 394 to 397 are extracellular; sequence PRLD. Residues 398 to 418 traverse the membrane as a helical segment; sequence LVISLVGSVSSSALALIIPPL. At 419–439 the chain is on the cytoplasmic side; it reads LEVTTFYSEGMSPLTIFKDAL. Residues 440–460 traverse the membrane as a helical segment; that stretch reads ISILGFVGFVVGTYEALYELI. The Extracellular portion of the chain corresponds to 461 to 476; sequence QPSNAPIFINSTCAFI. N-linked (GlcNAc...) asparagine glycosylation is present at Asn470.

Belongs to the amino acid/polyamine transporter 2 family.

The protein localises to the cell membrane. It is found in the apical cell membrane. Its subcellular location is the lysosome membrane. The catalysed reaction is glycine(in) + H(+)(in) = glycine(out) + H(+)(out). It carries out the reaction L-alanine(in) + H(+)(in) = L-alanine(out) + H(+)(out). The enzyme catalyses D-alanine(in) + H(+)(in) = D-alanine(out) + H(+)(out). It catalyses the reaction L-proline(out) + H(+)(out) = L-proline(in) + H(+)(in). The catalysed reaction is D-proline(out) + H(+)(out) = D-proline(in) + H(+)(in). It carries out the reaction D-serine(out) + H(+)(out) = D-serine(in) + H(+)(in). The enzyme catalyses L-serine(in) + H(+)(in) = L-serine(out) + H(+)(out). It catalyses the reaction 4-aminobutanoate(in) + H(+)(in) = 4-aminobutanoate(out) + H(+)(out). The catalysed reaction is beta-alanine(in) + H(+)(in) = beta-alanine(out) + H(+)(out). Functionally, electrogenic proton/amino acid symporter with selectivity for small apolar L-amino acids, their D-enantiomers and selected amino acid derivatives such as 4-aminobutanoate/GABA. May be involved in the efflux from the lysosomal compartment of neutral amino acids resulting from proteolysis. May play a role in specifying sites for exocytosis in neurons. This Homo sapiens (Human) protein is Proton-coupled amino acid transporter 1.